The sequence spans 1345 residues: Protein dispatched homolog 2 (1345 aa).

The tract at residues 1-28 is disordered; it reads MAPEASPERSCSLHTCPLEDPTGAPVPP. Residues 125 to 145 traverse the membrane as a helical segment; it reads VAVIVGCLAFIFLCTLAGLLG. 2 N-linked (GlcNAc...) asparagine glycosylation sites follow: N304 and N420. Positions 429–598 constitute an SSD domain; that stretch reads LGLKPRLLKY…LLWLPATVVL (170 aa). Helical transmembrane passes span 440 to 460, 465 to 485, 497 to 517, 544 to 564, 572 to 592, and 659 to 679; these read LAEDTMYPLIALVVIFFGMSL, LFITFMSLLGVLGSLMVAYFL, FVNLAALLLLSGVCVNYTLIF, FGYLLLVSGLTTSAAFYGSYL, CFALFMGTAVLVHMGLTLLWL, and YIWICWFAALAAGGAYIGGVS. An N-linked (GlcNAc...) asparagine glycan is attached at N776. 5 helical membrane-spanning segments follow: residues 919–939, 945–965, 974–994, 1019–1039, and 1043–1063; these read PAVVLGLALALAFATLLLSTW, LFSVAAVAGTVLLTVGLLVLL, ALFLSASVGLSVDLTINYCIS, AMTTGVLFASGVIMLPSTILL, and LGIIVMMVKFLGCGFASFFFQ. Disordered stretches follow at residues 1251-1271 and 1295-1345; these read VRVPDSVGTSPEVMNGTGHPI and PNMP…GYSS. The span at 1297–1306 shows a compositional bias: polar residues; it reads MPNSHHSSLS. The residue at position 1310 (R1310) is an Omega-N-methylarginine.

This sequence belongs to the dispatched family.

The protein localises to the membrane. The chain is Protein dispatched homolog 2 (Disp2) from Mus musculus (Mouse).